A 168-amino-acid chain; its full sequence is UPF0114 protein PC1_0431 (168 aa).

The next 3 helical transmembrane spans lie at 15-35 (LLAP…IKFF), 53-73 (LVLV…LVMV), and 136-156 (LMWY…MGYL).

This sequence belongs to the UPF0114 family.

The protein localises to the cell membrane. The protein is UPF0114 protein PC1_0431 of Pectobacterium carotovorum subsp. carotovorum (strain PC1).